Here is a 206-residue protein sequence, read N- to C-terminus: FMN-dependent NADH:quinone oxidoreductase 1 (206 aa).

FMN-binding positions include Ser10 and 16-18; that span reads SLS.

Belongs to the azoreductase type 1 family. Homodimer. The cofactor is FMN.

The enzyme catalyses 2 a quinone + NADH + H(+) = 2 a 1,4-benzosemiquinone + NAD(+). It catalyses the reaction N,N-dimethyl-1,4-phenylenediamine + anthranilate + 2 NAD(+) = 2-(4-dimethylaminophenyl)diazenylbenzoate + 2 NADH + 2 H(+). Quinone reductase that provides resistance to thiol-specific stress caused by electrophilic quinones. Functionally, also exhibits azoreductase activity. Catalyzes the reductive cleavage of the azo bond in aromatic azo compounds to the corresponding amines. The protein is FMN-dependent NADH:quinone oxidoreductase 1 of Burkholderia lata (strain ATCC 17760 / DSM 23089 / LMG 22485 / NCIMB 9086 / R18194 / 383).